The following is a 291-amino-acid chain: Nitrogenase iron protein (291 aa).

11–18 serves as a coordination point for ATP; it reads GKGGIGKS. Cysteine 99 is a binding site for [4Fe-4S] cluster. Position 102 is an ADP-ribosylarginine; by dinitrogenase reductase ADP-ribosyltransferase (arginine 102). Position 133 (cysteine 133) interacts with [4Fe-4S] cluster.

Belongs to the NifH/BchL/ChlL family. In terms of assembly, homodimer. [4Fe-4S] cluster serves as cofactor. The reversible ADP-ribosylation of Arg-102 inactivates the nitrogenase reductase and regulates nitrogenase activity.

The enzyme catalyses N2 + 8 reduced [2Fe-2S]-[ferredoxin] + 16 ATP + 16 H2O = H2 + 8 oxidized [2Fe-2S]-[ferredoxin] + 2 NH4(+) + 16 ADP + 16 phosphate + 6 H(+). In terms of biological role, the key enzymatic reactions in nitrogen fixation are catalyzed by the nitrogenase complex, which has 2 components: the iron protein and the molybdenum-iron protein. The chain is Nitrogenase iron protein from Cereibacter sphaeroides (strain ATCC 17023 / DSM 158 / JCM 6121 / CCUG 31486 / LMG 2827 / NBRC 12203 / NCIMB 8253 / ATH 2.4.1.) (Rhodobacter sphaeroides).